The following is a 51-amino-acid chain: Bacteriochlorophyll e-binding protein (51 aa).

Histidine 25 lines the a bacteriochlorophyll e pocket.

It belongs to the BChl C/E-binding protein family.

Its subcellular location is the chlorosome. It is found in the chlorosome envelope. Functionally, component of the photosynthetic apparatus. The light harvesting B740 complex binds bacteriochlorophyll e. This is Bacteriochlorophyll e-binding protein (csmA) from Chlorobium phaeovibrioides.